A 600-amino-acid polypeptide reads, in one-letter code: Glutamine--fructose-6-phosphate aminotransferase [isomerizing] (600 aa).

Cys-2 functions as the Nucleophile; for GATase activity in the catalytic mechanism. A Glutamine amidotransferase type-2 domain is found at 2–217; that stretch reads CGIVGFIGEQ…DKEIVIVMKE (216 aa). 2 SIS domains span residues 283–422 and 452–590; these read IRNA…AKGE and LAKQ…VDKP. Lys-595 acts as the For Fru-6P isomerization activity in catalysis.

In terms of assembly, homodimer.

The protein localises to the cytoplasm. It catalyses the reaction D-fructose 6-phosphate + L-glutamine = D-glucosamine 6-phosphate + L-glutamate. Its function is as follows. Catalyzes the first step in hexosamine metabolism, converting fructose-6P into glucosamine-6P using glutamine as a nitrogen source. The protein is Glutamine--fructose-6-phosphate aminotransferase [isomerizing] of Bacillus thuringiensis subsp. konkukian (strain 97-27).